A 237-amino-acid chain; its full sequence is Corrinoid adenosyltransferase MMAB (237 aa).

A mitochondrion-targeting transit peptide spans 1–26 (MAVWLFGGRLGLRGRLSACRLLCPRF). Residues 30–49 (GPQGGEDGDRLQPSSTAAKI) are disordered. Residues 54–57 (TKTG), 62–63 (SS), and lysine 72 each bind ATP. Phosphoserine is present on serine 128. An ATP-binding site is contributed by 184 to 188 (RRAER). Residue lysine 205 is modified to N6-succinyllysine. Residue asparagine 208 coordinates ATP. An N6-acetyllysine; alternate modification is found at lysine 224. Lysine 224 is modified (N6-succinyllysine; alternate).

Belongs to the Cob(I)alamin adenosyltransferase family. As to quaternary structure, homotrimer.

It is found in the mitochondrion. It carries out the reaction cob(I)alamin-[corrinoid adenosyltransferase] + ATP = apo-[corrinoid adenosyltransferase] + adenosylcob(III)alamin + triphosphate. In terms of biological role, converts cob(I)alamin to adenosylcobalamin (adenosylcob(III)alamin), a coenzyme for methylmalonyl-CoA mutase, therefore participates in the final step of the vitamin B12 conversion. Generates adenosylcobalamin (AdoCbl) and directly delivers the cofactor to MUT in a transfer that is stimulated by ATP-binding to MMAB and gated by MMAA. This Mus musculus (Mouse) protein is Corrinoid adenosyltransferase MMAB.